Reading from the N-terminus, the 358-residue chain is SPbeta prophage-derived probable integrase/recombinase YopP (358 aa).

Residues 23 to 114 (NKDIRSSSGN…SLKMLYTYLE (92 aa)) enclose the Core-binding (CB) domain. In terms of domain architecture, Tyr recombinase spans 137-319 (KNWDKTTQTE…NIANSAGVTM (183 aa)). Residues R178, K206, H268, and H295 contribute to the active site. The active-site O-(3'-phospho-DNA)-tyrosine intermediate is Y304.

The protein belongs to the 'phage' integrase family.

Functionally, probable recombinase that does not seem to have a role in chromosome dimer resolution per se but rather may have some facilitative role during chromosome partitioning in general. The chain is SPbeta prophage-derived probable integrase/recombinase YopP (yopP) from Bacillus subtilis (strain 168).